A 283-amino-acid chain; its full sequence is MAGSNILHKIKLKAGFCGSAPDMGRGKSKMWKNITHGFHCVKGKSSHPMEDYVVSEFKKLEGHELGLFAIFDGHLGHDVAKYLQTNLFDNILKEKDFWTDTENAIRNAYRSTDAVILQQSLKLGKGGSTAVTGILIDGKKLVVANVGDSRAVMSKNGVAHQLSVDHEPSKEKKEIESRGGFVSNIPGDVPRVDGQLAVARAFGDKSLKLHLSSEPDITHQTIDDHTEFILFASDGIWKVLSNQEAVDAIKSIKDPHAAAKHLIEEAISRKSKDDISCIVVKFH.

Residues 35–282 enclose the PPM-type phosphatase domain; sequence THGFHCVKGK…DDISCIVVKF (248 aa). Mn(2+)-binding residues include Asp72, Gly73, Asp234, and Asp273.

It belongs to the PP2C family. Requires Mg(2+) as cofactor. The cofactor is Mn(2+).

The enzyme catalyses O-phospho-L-seryl-[protein] + H2O = L-seryl-[protein] + phosphate. It carries out the reaction O-phospho-L-threonyl-[protein] + H2O = L-threonyl-[protein] + phosphate. The polypeptide is Probable protein phosphatase 2C 58 (Arabidopsis thaliana (Mouse-ear cress)).